The primary structure comprises 315 residues: Protoheme IX farnesyltransferase (315 aa).

A run of 9 helical transmembrane segments spans residues 21-41 (YFAL…LVGL), 52-74 (VGFC…NMWW), 98-118 (GEAL…LALA), 121-141 (LLAA…YSMW), 150-170 (IVIG…AATG), 177-197 (VLMF…LALF), 223-243 (ILVY…TPVA), 246-266 (LYLA…WDIW), and 284-304 (FFKF…AEAI).

This sequence belongs to the UbiA prenyltransferase family. Protoheme IX farnesyltransferase subfamily. Interacts with CtaA.

It localises to the cell inner membrane. It carries out the reaction heme b + (2E,6E)-farnesyl diphosphate + H2O = Fe(II)-heme o + diphosphate. It functions in the pathway porphyrin-containing compound metabolism; heme O biosynthesis; heme O from protoheme: step 1/1. Functionally, converts heme B (protoheme IX) to heme O by substitution of the vinyl group on carbon 2 of heme B porphyrin ring with a hydroxyethyl farnesyl side group. The chain is Protoheme IX farnesyltransferase from Dinoroseobacter shibae (strain DSM 16493 / NCIMB 14021 / DFL 12).